The primary structure comprises 75 residues: Large ribosomal subunit protein bL31 (75 aa).

The protein belongs to the bacterial ribosomal protein bL31 family. Type A subfamily. In terms of assembly, part of the 50S ribosomal subunit.

Binds the 23S rRNA. In Zymomonas mobilis subsp. mobilis (strain ATCC 31821 / ZM4 / CP4), this protein is Large ribosomal subunit protein bL31.